The chain runs to 85 residues: Large ribosomal subunit protein bL27 (85 aa).

The tract at residues 1 to 21 (MAHKKGQGSTQNNRDSAGRRL) is disordered.

Belongs to the bacterial ribosomal protein bL27 family.

This chain is Large ribosomal subunit protein bL27, found in Nitratiruptor sp. (strain SB155-2).